A 539-amino-acid chain; its full sequence is Phosphoenolpyruvate carboxykinase (ATP) (539 aa).

Arg64, Tyr206, and Lys212 together coordinate substrate. ATP is bound by residues Lys212, His231, and 247-255; that span reads GLSGTGKTT. Positions 212 and 231 each coordinate Mn(2+). Asp268 lines the Mn(2+) pocket. Residues Glu296, Arg332, 448 to 449, and Thr454 each bind ATP; that span reads RI. Arg332 is a substrate binding site.

It belongs to the phosphoenolpyruvate carboxykinase (ATP) family. Monomer. It depends on Mn(2+) as a cofactor.

It localises to the cytoplasm. It catalyses the reaction oxaloacetate + ATP = phosphoenolpyruvate + ADP + CO2. It participates in carbohydrate biosynthesis; gluconeogenesis. Functionally, involved in the gluconeogenesis. Catalyzes the conversion of oxaloacetate (OAA) to phosphoenolpyruvate (PEP) through direct phosphoryl transfer between the nucleoside triphosphate and OAA. This chain is Phosphoenolpyruvate carboxykinase (ATP), found in Yersinia pestis bv. Antiqua (strain Antiqua).